Consider the following 618-residue polypeptide: MSARPQADFDGKAFAARLSTAPGVYRMYAADDSLLYVGKAGALRKRVGSYFNGTPKNARLTSMLSQVARMDVTVTRSEAEALLLENQLIKSLSPRYNVSLRDDKSYPYVLLTREDWPRIALHRGPRAVNGRYFGPYAGVTAVRETLNLMHKLFKLRSCEDSVFRNRSRPCLQYQIGRCSAPCVDLVAAQDYQEAVRRATMFLEGKSDQLGEEIMHSMQQASEALEFERAARLRDLLSSLRSMQNRQYVDGRAADLDVLACATQSSQACVLLLSFRDGRNLGTRSFFPKTNGEDSAEEILAAFVSQYYAEHAPPREILLDRAIPDAELIEAALSAAAEHKVALKWNVRGERAGYLLLASRNAQLTLVTELTSQSAQHARSEALREMLGLAEQVKRVECFDISHTMGEATVASCVVFDASGPVRGQYRRFNISGITPGDDYAAMRQAIERRFRRAVEENGVLPDVLLIDGGAGQLAQAQAALADLGIENVLLVGVAKGEERRAGHEALILADGRELRPGAASPALQFIQQVRDEAHRFAITGHRGRRQKARMTSKLEDIPGIGPRRRASLLKHFGGLVGLKAAGEAEIARVEGVNAALAARIYANLHGLALPDAAGESSP.

A GIY-YIG domain is found at 20 to 98 (TAPGVYRMYA…IKSLSPRYNV (79 aa)). Positions 207–242 (DQLGEEIMHSMQQASEALEFERAARLRDLLSSLRSM) constitute a UVR domain.

This sequence belongs to the UvrC family. In terms of assembly, interacts with UvrB in an incision complex.

It localises to the cytoplasm. In terms of biological role, the UvrABC repair system catalyzes the recognition and processing of DNA lesions. UvrC both incises the 5' and 3' sides of the lesion. The N-terminal half is responsible for the 3' incision and the C-terminal half is responsible for the 5' incision. In Xanthomonas campestris pv. campestris (strain B100), this protein is UvrABC system protein C.